Consider the following 289-residue polypeptide: Mitochondrial fission regulator 1-like (289 aa).

At Thr27 the chain carries Phosphothreonine. 8 positions are modified to phosphoserine: Ser38, Ser100, Ser107, Ser221, Ser222, Ser235, Ser258, and Ser270.

The protein belongs to the MTFR1 family. Post-translationally, phosphorylated by AMPK. Upon stress, phosphorylation by AMPK is sufficient to induce mitochondrial fragmentation.

It is found in the mitochondrion outer membrane. In terms of biological role, mitochondrial protein required for adaptation of miochondrial dynamics to metabolic changes. Regulates mitochondrial morphology at steady state and mediates AMPK-dependent stress-induced mitochondrial fragmentation via the control of OPA1 levels. This chain is Mitochondrial fission regulator 1-like (Mtfr1l), found in Rattus norvegicus (Rat).